The chain runs to 236 residues: tRNA1(Val) (adenine(37)-N6)-methyltransferase (236 aa).

The protein belongs to the methyltransferase superfamily. tRNA (adenine-N(6)-)-methyltransferase family.

The protein resides in the cytoplasm. The enzyme catalyses adenosine(37) in tRNA1(Val) + S-adenosyl-L-methionine = N(6)-methyladenosine(37) in tRNA1(Val) + S-adenosyl-L-homocysteine + H(+). In terms of biological role, specifically methylates the adenine in position 37 of tRNA(1)(Val) (anticodon cmo5UAC). This is tRNA1(Val) (adenine(37)-N6)-methyltransferase from Histophilus somni (strain 2336) (Haemophilus somnus).